Here is a 287-residue protein sequence, read N- to C-terminus: Bifunctional protein FolD (287 aa).

NADP(+)-binding positions include 168-170, Ser193, and Ile234; that span reads GRS.

Belongs to the tetrahydrofolate dehydrogenase/cyclohydrolase family. In terms of assembly, homodimer.

It carries out the reaction (6R)-5,10-methylene-5,6,7,8-tetrahydrofolate + NADP(+) = (6R)-5,10-methenyltetrahydrofolate + NADPH. The catalysed reaction is (6R)-5,10-methenyltetrahydrofolate + H2O = (6R)-10-formyltetrahydrofolate + H(+). Its pathway is one-carbon metabolism; tetrahydrofolate interconversion. Functionally, catalyzes the oxidation of 5,10-methylenetetrahydrofolate to 5,10-methenyltetrahydrofolate and then the hydrolysis of 5,10-methenyltetrahydrofolate to 10-formyltetrahydrofolate. In Clostridioides difficile (strain 630) (Peptoclostridium difficile), this protein is Bifunctional protein FolD.